A 566-amino-acid polypeptide reads, in one-letter code: Liver carboxylesterase (566 aa).

A signal peptide spans 1–18 (MWLLPLVLTSLASSATWA). N-linked (GlcNAc...) asparagine glycosylation is present at Asn-80. Cys-88 and Cys-117 form a disulfide bridge. Ser-222 acts as the Acyl-ester intermediate in catalysis. Cys-274 and Cys-285 are disulfide-bonded. The active-site Charge relay system is Glu-354. The residue at position 379 (Ser-379) is a Phosphoserine. His-467 (charge relay system) is an active-site residue. The short motif at 563–566 (HAEL) is the Prevents secretion from ER element.

It belongs to the type-B carboxylesterase/lipase family.

The protein resides in the endoplasmic reticulum lumen. The enzyme catalyses a carboxylic ester + H2O = an alcohol + a carboxylate + H(+). Activated by CHAPS at concentrations of up to 130 mM, higher concentrations reduce activity. In the presence of CHAPS, activity is stimulated by non-ionic detergents. Inhibited by the esterase inhibitors diisopropylfluorophosphate and phenylmethylsulfonyl fluoride. Involved in the detoxification of xenobiotics and in the activation of ester and amide prodrugs. Active towards triacylglycerides containing short-chain fatty acids from C2 to C6, and 1(3)-monoacylglycerols containing fatty acids from C2 to C12. Inactive on long-chain triacylglycerols and diacylglycerol. Hydrolyzes aromatic and alkyl esters and vitamin A acetate. The hydrolysis rate depends upon the amino acid promoiety and the esterification site of the prodrug. Aromatic promoieties are favored, highest rates are observed with phenylalanyl progdrugs, hydrolysis of valyl and isoleucyl prodrugs is less efficient. With floxuridine prodrugs, activity is higher on 5' monoesters than on 3' monoesters. With gemcitabine prodrugs, activity is higher on 3' monoesters than on 5' monoesters. This Sus scrofa (Pig) protein is Liver carboxylesterase.